Here is a 303-residue protein sequence, read N- to C-terminus: UDP-3-O-acyl-N-acetylglucosamine deacetylase (303 aa).

Zn(2+)-binding residues include His-78, His-237, and Asp-241. His-264 acts as the Proton donor in catalysis.

The protein belongs to the LpxC family. Zn(2+) is required as a cofactor.

It carries out the reaction a UDP-3-O-[(3R)-3-hydroxyacyl]-N-acetyl-alpha-D-glucosamine + H2O = a UDP-3-O-[(3R)-3-hydroxyacyl]-alpha-D-glucosamine + acetate. It functions in the pathway glycolipid biosynthesis; lipid IV(A) biosynthesis; lipid IV(A) from (3R)-3-hydroxytetradecanoyl-[acyl-carrier-protein] and UDP-N-acetyl-alpha-D-glucosamine: step 2/6. In terms of biological role, catalyzes the hydrolysis of UDP-3-O-myristoyl-N-acetylglucosamine to form UDP-3-O-myristoylglucosamine and acetate, the committed step in lipid A biosynthesis. The protein is UDP-3-O-acyl-N-acetylglucosamine deacetylase of Pseudomonas fluorescens (strain Pf0-1).